The following is a 701-amino-acid chain: Centrosomal protein of 83 kDa (701 aa).

Residues 1 to 14 (MVVSTFTDMDTFPN) show a composition bias toward polar residues. The segment at 1-23 (MVVSTFTDMDTFPNNFPPGGDSG) is disordered. Coiled coils occupy residues 40-634 (LRCE…SLIL) and 665-698 (HMQE…ELGS). S698 bears the Phosphoserine mark.

This sequence belongs to the CEP83 family. Interacts with CEP164 and IFT20.

Its subcellular location is the cytoplasm. It is found in the cytoskeleton. The protein localises to the microtubule organizing center. It localises to the centrosome. The protein resides in the centriole. Component of the distal appendage region of the centriole involved in the initiation of primary cilium assembly. May collaborate with IFT20 in the trafficking of ciliary membrane proteins from the Golgi complex to the cilium during the initiation of primary cilium assembly. This is Centrosomal protein of 83 kDa (CEP83) from Homo sapiens (Human).